Here is a 315-residue protein sequence, read N- to C-terminus: Methionyl-tRNA formyltransferase (315 aa).

113–116 (SLLP) contributes to the (6S)-5,6,7,8-tetrahydrofolate binding site.

It belongs to the Fmt family.

It catalyses the reaction L-methionyl-tRNA(fMet) + (6R)-10-formyltetrahydrofolate = N-formyl-L-methionyl-tRNA(fMet) + (6S)-5,6,7,8-tetrahydrofolate + H(+). Functionally, attaches a formyl group to the free amino group of methionyl-tRNA(fMet). The formyl group appears to play a dual role in the initiator identity of N-formylmethionyl-tRNA by promoting its recognition by IF2 and preventing the misappropriation of this tRNA by the elongation apparatus. This is Methionyl-tRNA formyltransferase from Escherichia coli O45:K1 (strain S88 / ExPEC).